The sequence spans 352 residues: Cuticle collagen dpy-17 (352 aa).

An N-terminal signal peptide occupies residues M1 to Q29. Residues R61–R64 form a furin-like endopeptidase recognition region region. 2 disordered regions span residues G73–D143 and G156–N352. Residues G87 to Q97 are compositionally biased toward gly residues. Triple-helical region regions lie at residues G156–D182, G202–H264, G267–R290, and G294–D329. Positions G202–G259 constitute a Collagen-like domain. Over residues P207 to G259 the composition is skewed to low complexity. A compositionally biased stretch (polar residues) spans Q337 to N352.

This sequence belongs to the cuticular collagen family. Collagen polypeptide chains are complexed within the cuticle by disulfide bonds and other types of covalent cross-links.

It is found in the secreted. Its subcellular location is the extracellular space. In terms of biological role, secreted collagen that forms part of the nematode cuticle, which functions as an exoskeleton and a barrier to protect the worm from its environment. Secretion and subsequent incorporation into the cuticle is likely mediated by bli-4, which probably cleaves at the N-terminal consensus furin cleavage site. This Caenorhabditis elegans protein is Cuticle collagen dpy-17.